The following is a 777-amino-acid chain: Protein argonaute (777 aa).

Positions 1–107 (MAPVQAADEM…ARLDDALEEA (107 aa)) are N-terminal domain. Positions 108–182 (LPKYAAVKKR…TIGMRYDIEA (75 aa)) are linker L1. The tract at residues 183 to 243 (SLRDLLEAGI…VNVNDAKLEG (61 aa)) is PAZ domain. The segment at 244 to 341 (SKENFTRCLS…DRTGAKSAEY (98 aa)) is linker L2. The tract at residues 342-509 (AWRGLSQFGP…SIATYAKLNG (168 aa)) is mid domain. Residues 445-757 (GIVVLFEDHA…IAELLGRLKS (313 aa)) form the Piwi domain. A PIWI domain region spans residues 510–777 (TPWTVNHDKA…IKLKWSRWFL (268 aa)). Residue leucine 777 coordinates Mg(2+).

The protein belongs to the argonaute family. Long pAgo subfamily. It depends on Mg(2+) as a cofactor.

In terms of biological role, a catalytically inactive argonaute protein. Binds 5'-phosphorylated RNA as the guide (gRNA) and short DNA as target DNA (tDNA); does not bind other nucleic acid combinations, does not bind tDNA alone. Has highest affinity for gRNA that begins with 5'-phospho-U and poor affinity for gRNA with 5'-OH. Upon expression in E.coli, plasmid sequences are found in RsAgo, its induction leads to plasmid degradation and suppression of genes encoded on foreign plasmids, suggesting it may also interfere with transcription. Does not interact with preformed gRNA:tDNA duplexes. Mismatches and nt bulges are tolerated in the ternary complex, however, they significantly reduce the affinity of RsAgo:gRNA for tDNA. Mismatched tDNA can cause dissociation of gRNA from RsAgo. In situ binds 2 populations of RNA (15-19 and 45 nucleotides, nt) and a population of ssDNA 22-24 nt in length. The small sense RNA is probably derived from mRNA degradation and strongly enriched for U in the first and U/C in the second positions. The small DNA is enriched for sequences complementary to the RNA, with 3 nt overhangs on both ends; another nuclease may trim the ends. The sequences are largely derived from exogenous plasmids or genome-encoded foreign elements such as prophages and transposons. Forms a ternary complex with gRNA and double-stranded tDNA only when the tDNA is open. In Cereibacter sphaeroides (strain ATCC 17025 / ATH 2.4.3) (Rhodobacter sphaeroides), this protein is Protein argonaute.